The sequence spans 379 residues: Cytokine receptor common subunit gamma (379 aa).

Residues 1–22 form the signal peptide; it reads MLKPPLPLRSLLFLQLPLLGVG. Topologically, residues 23–269 are extracellular; the sequence is LNPKFLTPSG…ENIENPENPS (247 aa). An intrachain disulfide couples Cys68 to Cys78. Asn77, Asn81, and Asn90 each carry an N-linked (GlcNAc...) asparagine glycan. A disulfide bridge links Cys109 with Cys122. The Fibronectin type-III domain occupies 163–260; sequence APENLTLRNL…IHWGSNTSKE (98 aa). Asn166 and Asn171 each carry an N-linked (GlcNAc...) asparagine glycan. Residues 244 to 248 carry the WSXWS motif motif; that stretch reads WSDWS. Residues 270 to 290 traverse the membrane as a helical segment; it reads LFALEAVLIPLGSMGLIVSLI. The Cytoplasmic segment spans residues 291 to 379; it reads CVYCWLERTM…PPCYTLKPEP (89 aa). Residues 299-307 carry the Box 1 motif motif; the sequence is TMPRIPTLK. Phosphothreonine is present on Thr305. Positions 349-370 are disordered; that stretch reads PPKGGEGPGGSPCSQHSPYWAP.

Belongs to the type I cytokine receptor family. Type 5 subfamily. As to quaternary structure, the gamma subunit is common to the IL2, IL4, IL7, IL15, IL21 and probably also the IL13 receptors. Interacts with SHB upon interleukin stimulation.

It localises to the cell membrane. The protein resides in the cell surface. In terms of biological role, common subunit for the receptors for a variety of interleukins. Probably in association with IL15RA, involved in the stimulation of neutrophil phagocytosis by IL15. In Bos taurus (Bovine), this protein is Cytokine receptor common subunit gamma (IL2RG).